The following is a 730-amino-acid chain: Hepatocyte growth factor (730 aa).

Residues 1–31 (MWVTRLLPVLLLQHVLLHLLLLPIAIPYAEG) form the signal peptide. Gln32 carries the post-translational modification Pyrrolidone carboxylic acid. The PAN domain maps to 37-123 (NTLHEFKRSA…HEFDLYENKD (87 aa)). 8 cysteine pairs are disulfide-bonded: Cys70/Cys96, Cys74/Cys84, Cys128/Cys206, Cys149/Cys189, Cys177/Cys201, Cys211/Cys288, Cys232/Cys271, and Cys260/Cys283. 2 Kringle domains span residues 128–206 (CIIG…IPQC) and 211–288 (CMTC…IKMC). Asn294 carries N-linked (GlcNAc...) asparagine glycosylation. Disulfide bonds link Cys305–Cys383, Cys326–Cys365, Cys354–Cys377, Cys391–Cys469, Cys412–Cys452, Cys440–Cys464, Cys487–Cys606, Cys519–Cys535, Cys614–Cys681, Cys644–Cys660, and Cys671–Cys699. Kringle domains lie at 305–383 (CIQG…IPKC) and 391–469 (CYRG…ISRC). One can recognise a Peptidase S1 domain in the interval 495 to 723 (VVNGIPTRTN…YAKWIHKIIL (229 aa)). Asn568 and Asn655 each carry an N-linked (GlcNAc...) asparagine glycan.

It belongs to the peptidase S1 family. Plasminogen subfamily. As to quaternary structure, dimer of an alpha chain and a beta chain linked by a disulfide bond. Interacts with SRPX2; the interaction increases HGF mitogenic activity. The single-chain precursor undergoes proteolytic processing by TMPRSS13 resulting in an active two-chain form. The single-chain precursor undergoes proteolytic processing by HGFAC resulting in an active two-chain form.

Potent mitogen for mature parenchymal hepatocyte cells, seems to be a hepatotrophic factor, and acts as a growth factor for a broad spectrum of tissues and cell types. Activating ligand for the receptor tyrosine kinase MET by binding to it and promoting its dimerization. Activates MAPK signaling following TMPRSS13 cleavage and activation. The chain is Hepatocyte growth factor (HGF) from Bos taurus (Bovine).